A 201-amino-acid polypeptide reads, in one-letter code: Small ribosomal subunit protein uS4c (201 aa).

A disordered region spans residues Ala17 to Tyr44. Positions Met89 to Gln149 constitute an S4 RNA-binding domain.

Belongs to the universal ribosomal protein uS4 family. Part of the 30S ribosomal subunit. Contacts protein S5. The interaction surface between S4 and S5 is involved in control of translational fidelity.

It localises to the plastid. It is found in the chloroplast. Functionally, one of the primary rRNA binding proteins, it binds directly to 16S rRNA where it nucleates assembly of the body of the 30S subunit. Its function is as follows. With S5 and S12 plays an important role in translational accuracy. The sequence is that of Small ribosomal subunit protein uS4c (rps4) from Solanum bulbocastanum (Wild potato).